A 228-amino-acid polypeptide reads, in one-letter code: Glutamate transport system permease protein GluC (228 aa).

5 helical membrane passes run 16–36 (FWVT…FGTI), 64–84 (LTLV…LTLA), 100–120 (AVLG…RSGI), 145–165 (IIFP…LIAL), and 195–215 (LFVV…PMGL). Residues 16–217 (FWVTIKLTIY…ILTLPMGLGL (202 aa)) enclose the ABC transmembrane type-1 domain.

The protein belongs to the binding-protein-dependent transport system permease family. HisMQ subfamily. The complex is composed of two ATP-binding proteins (GluA), two transmembrane proteins (GluC and GluD) and a solute-binding protein (GluB).

The protein resides in the cell membrane. Functionally, part of the ABC transporter complex GluABCD involved in glutamate uptake. Probably responsible for the translocation of the substrate across the membrane. This is Glutamate transport system permease protein GluC from Corynebacterium glutamicum (strain ATCC 13032 / DSM 20300 / JCM 1318 / BCRC 11384 / CCUG 27702 / LMG 3730 / NBRC 12168 / NCIMB 10025 / NRRL B-2784 / 534).